The primary structure comprises 121 residues: MDKTQSRLRRARQTRIKIAELQVARLAVHRTNTHIYAQVFSPCGTKVLASASTLEAEVRAELADKSGKGGNVNAATLIGKRIAEKAKAAGIESVAFDRSGFRYHGRVKALAEAAREAGLKF.

It belongs to the universal ribosomal protein uL18 family. Part of the 50S ribosomal subunit; part of the 5S rRNA/L5/L18/L25 subcomplex. Contacts the 5S and 23S rRNAs.

This is one of the proteins that bind and probably mediate the attachment of the 5S RNA into the large ribosomal subunit, where it forms part of the central protuberance. This Burkholderia ambifaria (strain MC40-6) protein is Large ribosomal subunit protein uL18.